We begin with the raw amino-acid sequence, 170 residues long: MSVTLHTDLGDIKIEVFCEAVPKTAENFLALCASGYYDNNTFHRNIPGFMIQVHEHLHTGDPTGTGKGGNSIWGKKFNDEIRSTLKHNSRGIVSMANSGPNTNGSQFFITYAKHPHLDTKYTVFGKVIDGADSTLDMMEKVPVDEKHRPLQEFRIKSVTIHANPIADKQL.

In terms of domain architecture, PPIase cyclophilin-type spans 1–160 (MSVTLHTDLG…QEFRIKSVTI (160 aa)).

This sequence belongs to the cyclophilin-type PPIase family. PPIL3 subfamily.

It carries out the reaction [protein]-peptidylproline (omega=180) = [protein]-peptidylproline (omega=0). Functionally, PPIases accelerate the folding of proteins. It catalyzes the cis-trans isomerization of proline imidic peptide bonds in oligopeptides. The chain is Peptidyl-prolyl cis-trans isomerase-like 3 (cyp4) from Rhizopus delemar (strain RA 99-880 / ATCC MYA-4621 / FGSC 9543 / NRRL 43880) (Mucormycosis agent).